The primary structure comprises 107 residues: UPF0145 protein YbjQ (107 aa).

Belongs to the UPF0145 family.

In Shigella flexneri, this protein is UPF0145 protein YbjQ.